A 512-amino-acid chain; its full sequence is Maturase K (512 aa).

Belongs to the intron maturase 2 family. MatK subfamily.

It localises to the plastid. The protein resides in the chloroplast. In terms of biological role, usually encoded in the trnK tRNA gene intron. Probably assists in splicing its own and other chloroplast group II introns. The protein is Maturase K of Amorphophallus paeoniifolius (Whitespot giant arum).